Reading from the N-terminus, the 926-residue chain is MTDSKDDKTLSVTGKKTLTLKPTGVNQGTVRQDMGRGRTKAVVVETRKRRPTRPEDERAGQPQGRVGDDAPATAAAAPVQTPAPVQAPAPVAAAPQAPRPAAPAQRVQQTNQYSQQRHPGQQNRPQASSQPSRQPDRPRGAVLHDLSASEMDARRRALAEAQVREVEDAKRRAEEEVRRQAEEVERQRLAALEAIRQAEEDKARALEAKNAPEPVAEPVAPVAETPRAADPAPRAPSPAGAKPAAGAPAPSFVRGRKPEGEDDENRGPARGGPVRGKVVRPEPAKVPARPKTEDERRRGKLTVTTAAVDEDGNARGRSLSAMRRRQEKFRRSQMQEPREKVMREVVLPETITIQELSQRMSERAVDVIKYLMKEGQMMKPGDVIDADLAELIATEFGHTVKRVSESDVEEGIFDVKDDAGEMVSRPPVVTIMGHVDHGKTSLLDAIRQTSVVSGEAGGITQHIGAYQVEQNGHKITFIDTPGHAAFTAMRARGAQATDIAILVVAADDSVMPQTIESIHHAKAANVPIIVAINKIDKHEANPEKVRQQLLQHEVFVESMGGEVLDVEVSAKNKLNLDKLLEAVLLQAEILDLKADPSRTAEGLVIEAQLDRGRGSVATVLVQKGTLRPGQIIVAGDQWGRVRALVNDKGGHVKEAGPAMPVEVLGLSGTPAAGDKFAVVESEARAREISEYRQRLARDKAAARQSGQRGSLEQMMSKLQDTGFKEFPLVIKADVQGSVEAIVAALDKLGTDEVRARIVHSGAGAITESDISLAEASNAAIIGFNVRANVQARAASERTGTEIRYYNIIYDLVDDVKAAMSGLLSPERRETFLGNAEILEVFNITKTGKVAGCRVVEGKVERGAGVRLVRDNVVIHEGKLKTLKRFKDEVADVPMGQECGMAFENYEDIRAGDTIECFRVEHITRTL.

2 disordered regions span residues M1–E185 and E200–G299. Composition is skewed to low complexity over residues T13–G24 and A70–Q96. Polar residues predominate over residues T110–R133. The segment covering M151–E185 has biased composition (basic and acidic residues). Positions A211–S251 are enriched in low complexity. The tr-type G domain occupies S424 to D591. Residues G433 to T440 are G1. Position 433–440 (G433–T440) interacts with GTP. Positions G458–H462 are G2. Residues D479 to G482 are G3. GTP contacts are provided by residues D479–H483 and N533–D536. Positions N533 to D536 are G4. The segment at S569–K571 is G5.

It belongs to the TRAFAC class translation factor GTPase superfamily. Classic translation factor GTPase family. IF-2 subfamily.

The protein resides in the cytoplasm. One of the essential components for the initiation of protein synthesis. Protects formylmethionyl-tRNA from spontaneous hydrolysis and promotes its binding to the 30S ribosomal subunits. Also involved in the hydrolysis of GTP during the formation of the 70S ribosomal complex. This chain is Translation initiation factor IF-2, found in Allorhizobium ampelinum (strain ATCC BAA-846 / DSM 112012 / S4) (Agrobacterium vitis (strain S4)).